Here is a 2353-residue protein sequence, read N- to C-terminus: C2 domain-containing protein 3 (2353 aa).

Residues 1 to 27 (MKQRKGQGSGGSRGRKKRGLSDISPST) form a disordered region. Ser466 is modified (phosphoserine). Disordered regions lie at residues 488–508 (KVLESSDHKLKKRSAGKRNRN) and 549–568 (GVPPDSPQMTPGKKSYAGPP). Basic residues predominate over residues 496–507 (KLKKRSAGKRNR). The C2 1 domain maps to 521-678 (DAQTMTLSVD…IQSELLSFSD (158 aa)). Ser728 carries the phosphoserine modification. C2 domains follow at residues 787-919 (SHNL…SRLL), 985-1147 (QPTA…HRED), 1171-1339 (SSGL…TGWY), and 1403-1533 (EPAT…TLTV). The interval 1569–1591 (HELDSMDCSSHSESEQLPRRNDE) is disordered. A C2 6 domain is found at 1617–1745 (TTAEVRLTQE…SGFQFVCGWY (129 aa)). Residues 1822 to 1846 (SKELDFSSPGRSDTTRSQASRHEEH) form a disordered region. Positions 1830–1839 (PGRSDTTRSQ) are enriched in polar residues. A Phosphoserine modification is found at Ser1891. Disordered stretches follow at residues 1972–2032 (ALSS…NGGR), 2084–2118 (TSPWSSVISDTSEVISPQPDEVQREGPSCPSPGPF), 2130–2269 (LSSP…QSLL), and 2301–2334 (PAATTDQDKSEATRGALSQRPCRPRPNSLPLNLP). A compositionally biased stretch (basic and acidic residues) spans 2007-2016 (PLVRAPDKGT). The span at 2084–2098 (TSPWSSVISDTSEVI) shows a compositional bias: polar residues. Residues Ser2114 and Ser2132 each carry the phosphoserine modification. A compositionally biased stretch (polar residues) spans 2181–2198 (SGAQQSSTFVGWSSPQTD). Over residues 2236 to 2253 (SRRENHKGPPIDSSDIRQ) the composition is skewed to basic and acidic residues. Polar residues predominate over residues 2254 to 2267 (RQVTTGSETSTKQS).

In terms of assembly, interacts with IFT88, BBS4 and PCM1. Interacts with OFD1; OFD1 may act as a negative regulator of C2CD3. Associates with the BBSome complex.

It localises to the cytoplasm. It is found in the cytoskeleton. The protein localises to the cilium basal body. Its subcellular location is the microtubule organizing center. The protein resides in the centrosome. It localises to the centriole. Component of the centrioles that acts as a positive regulator of centriole elongation. Promotes assembly of centriolar distal appendage, a structure at the distal end of the mother centriole that acts as an anchor of the cilium, and is required for recruitment of centriolar distal appendages proteins CEP83, SCLT1, CEP89, FBF1 and CEP164. Not required for centriolar satellite integrity or RAB8 activation. Required for primary cilium formation. Required for sonic hedgehog/SHH signaling and for proteolytic processing of GLI3. This is C2 domain-containing protein 3 (C2CD3) from Homo sapiens (Human).